The following is a 145-amino-acid chain: 3-hydroxyacyl-[acyl-carrier-protein] dehydratase FabZ (145 aa).

Histidine 52 is a catalytic residue.

Belongs to the thioester dehydratase family. FabZ subfamily.

The protein resides in the cytoplasm. The enzyme catalyses a (3R)-hydroxyacyl-[ACP] = a (2E)-enoyl-[ACP] + H2O. Involved in unsaturated fatty acids biosynthesis. Catalyzes the dehydration of short chain beta-hydroxyacyl-ACPs and long chain saturated and unsaturated beta-hydroxyacyl-ACPs. This is 3-hydroxyacyl-[acyl-carrier-protein] dehydratase FabZ from Deinococcus radiodurans (strain ATCC 13939 / DSM 20539 / JCM 16871 / CCUG 27074 / LMG 4051 / NBRC 15346 / NCIMB 9279 / VKM B-1422 / R1).